A 169-amino-acid polypeptide reads, in one-letter code: Succinate dehydrogenase cytochrome b560 subunit, mitochondrial (169 aa).

Residues 1-29 (MAALLLRHVGRHCLRAHLSPQLCIRNAVP) constitute a mitochondrion transit peptide. Residues 30–62 (LGTTAKEEMERFWSKNTTLNRPLSPHISIYGWS) are Mitochondrial matrix-facing. A helical membrane pass occupies residues 63 to 92 (LPMAMSICHRGTGIALSAGVSLFGLSALLV). Residues 93-112 (PGSFESHLEFVKSLCLGPAL) lie on the Mitochondrial intermembrane side of the membrane. A helical transmembrane segment spans residues 113–137 (IHTAKFALVFPLMYHTWNGIRHLMW). Histidine 127 is a heme b binding site. The Mitochondrial matrix segment spans residues 138–144 (DLGKGLT). Residues 145 to 166 (ISQLHQSGVAVLVLTVLSSVGL) traverse the membrane as a helical segment. Topologically, residues 167 to 169 (AAM) are mitochondrial intermembrane.

The protein belongs to the cytochrome b560 family. Component of complex II composed of four subunits: the flavoprotein (FP) SDHA, iron-sulfur protein (IP) SDHB, and a cytochrome b560 composed of SDHC and SDHD. Heme b serves as cofactor. In terms of processing, the N-terminus is blocked.

The protein localises to the mitochondrion inner membrane. It participates in carbohydrate metabolism; tricarboxylic acid cycle. Its function is as follows. Membrane-anchoring subunit of succinate dehydrogenase (SDH) that is involved in complex II of the mitochondrial electron transport chain and is responsible for transferring electrons from succinate to ubiquinone (coenzyme Q). SDH also oxidizes malate to the non-canonical enol form of oxaloacetate, enol-oxaloacetate. Enol-oxaloacetate, which is a potent inhibitor of the succinate dehydrogenase activity, is further isomerized into keto-oxaloacetate. This chain is Succinate dehydrogenase cytochrome b560 subunit, mitochondrial (SDHC), found in Bos taurus (Bovine).